We begin with the raw amino-acid sequence, 123 residues long: Fluoride-specific ion channel FluC (123 aa).

4 helical membrane-spanning segments follow: residues 1–21, 32–52, 64–84, and 99–119; these read MLEI…RYLM, ILSL…GLVI, IGLL…SFSY, and FGYT…GIYL. Na(+) contacts are provided by Gly74 and Thr77.

This sequence belongs to the fluoride channel Fluc/FEX (TC 1.A.43) family.

Its subcellular location is the cell inner membrane. The catalysed reaction is fluoride(in) = fluoride(out). Its activity is regulated as follows. Na(+) is not transported, but it plays an essential structural role and its presence is essential for fluoride channel function. Fluoride-specific ion channel. Important for reducing fluoride concentration in the cell, thus reducing its toxicity. In Gloeothece citriformis (strain PCC 7424) (Cyanothece sp. (strain PCC 7424)), this protein is Fluoride-specific ion channel FluC.